The following is a 110-amino-acid chain: UPF0339 protein YegP (110 aa).

2 repeat units span residues 10-58 (SSDS…RYEK) and 61-109 (ASNG…VKDN).

Belongs to the UPF0339 family. Duplicated subfamily.

This is UPF0339 protein YegP (yegP) from Escherichia coli O157:H7.